A 414-amino-acid chain; its full sequence is Glucose-1-phosphate adenylyltransferase (414 aa).

Alpha-D-glucose 1-phosphate contacts are provided by residues tyrosine 103, glycine 168, 183–184 (EK), and serine 201.

The protein belongs to the bacterial/plant glucose-1-phosphate adenylyltransferase family. In terms of assembly, homotetramer.

It carries out the reaction alpha-D-glucose 1-phosphate + ATP + H(+) = ADP-alpha-D-glucose + diphosphate. The protein operates within glycan biosynthesis; glycogen biosynthesis. In terms of biological role, involved in the biosynthesis of ADP-glucose, a building block required for the elongation reactions to produce glycogen. Catalyzes the reaction between ATP and alpha-D-glucose 1-phosphate (G1P) to produce pyrophosphate and ADP-Glc. The sequence is that of Glucose-1-phosphate adenylyltransferase from Thermus thermophilus (strain ATCC 27634 / DSM 579 / HB8).